Here is a 162-residue protein sequence, read N- to C-terminus: Large ribosomal subunit protein uL10 (162 aa).

It belongs to the universal ribosomal protein uL10 family. Part of the ribosomal stalk of the 50S ribosomal subunit. The N-terminus interacts with L11 and the large rRNA to form the base of the stalk. The C-terminus forms an elongated spine to which L12 dimers bind in a sequential fashion forming a multimeric L10(L12)X complex.

Its function is as follows. Forms part of the ribosomal stalk, playing a central role in the interaction of the ribosome with GTP-bound translation factors. The sequence is that of Large ribosomal subunit protein uL10 (rplJ) from Mycoplasma genitalium (strain ATCC 33530 / DSM 19775 / NCTC 10195 / G37) (Mycoplasmoides genitalium).